A 1185-amino-acid chain; its full sequence is Pyruvate carboxylase (1185 aa).

The 453-residue stretch at 32-484 (KFTKVLVANR…WTTFIDDTPE (453 aa)) folds into the Biotin carboxylation domain. The ATP site is built by Lys150, Glu234, and His269. In terms of domain architecture, ATP-grasp spans 154 to 351 (RAIAIRCGVP…IVSAQLHVAA (198 aa)). Arg326 is an active-site residue. The 269-residue stretch at 570–838 (GLIMDTTWRD…QLEFDNNQLR (269 aa)) folds into the Pyruvate carboxyltransferase domain. Substrate contacts are provided by residues 578–582 (RDAHQ) and Arg651. An a divalent metal cation-binding site is contributed by Asp579. Residues Lys747, His777, and His779 each contribute to the a divalent metal cation site. N6-carboxylysine is present on Lys747. Residue Thr912 participates in substrate binding. The 76-residue stretch at 1108 to 1183 (RADPGNPGHV…NGGDLCAVLE (76 aa)) folds into the Biotinyl-binding domain. Lys1149 carries the post-translational modification N6-biotinyllysine.

Biotin is required as a cofactor. It depends on Zn(2+) as a cofactor.

Its subcellular location is the cytoplasm. The catalysed reaction is hydrogencarbonate + pyruvate + ATP = oxaloacetate + ADP + phosphate + H(+). It participates in carbohydrate biosynthesis; gluconeogenesis. Pyruvate carboxylase catalyzes a 2-step reaction, involving the ATP-dependent carboxylation of the covalently attached biotin in the first step and the transfer of the carboxyl group to pyruvate in the second. In Schizosaccharomyces pombe (strain 972 / ATCC 24843) (Fission yeast), this protein is Pyruvate carboxylase (pyr1).